Here is a 203-residue protein sequence, read N- to C-terminus: Mitotic spindle checkpoint component mad2 (203 aa).

Positions Lys13 to Val197 constitute an HORMA domain.

Belongs to the MAD2 family. In terms of assembly, interacts with mad3 and slp1.

The protein localises to the nucleus. Feedback control that prevents cells with incompletely assembled spindles from leaving mitosis. It interacts with the anaphase promoting complex/cyclosome (APC/C) thereby inhibiting APC/C-dependent proteolysis, a step required for exit from mitosis. This is Mitotic spindle checkpoint component mad2 from Schizosaccharomyces pombe (strain 972 / ATCC 24843) (Fission yeast).